The sequence spans 139 residues: Large ribosomal subunit protein bL21 (139 aa).

The protein belongs to the bacterial ribosomal protein bL21 family. As to quaternary structure, part of the 50S ribosomal subunit. Contacts protein L20.

Functionally, this protein binds to 23S rRNA in the presence of protein L20. The chain is Large ribosomal subunit protein bL21 from Prochlorococcus marinus (strain NATL2A).